The sequence spans 342 residues: Trans-3-hydroxy-L-proline dehydratase (342 aa).

The active-site Proton acceptor is the Ser-90. Residues 91 to 92 (GS), Asp-251, and 256 to 257 (GT) contribute to the substrate site.

The protein belongs to the proline racemase family.

It carries out the reaction trans-3-hydroxy-L-proline = 1-pyrroline-2-carboxylate + H2O. Its function is as follows. Catalyzes the dehydration of trans-3-hydroxy-L-proline (t3LHyp) to Delta(1)-pyrroline-2-carboxylate (Pyr2C). Displays neither proline racemase activity nor 4-hydroxyproline 2-epimerase activity. The protein is Trans-3-hydroxy-L-proline dehydratase of Brucella suis biovar 1 (strain 1330).